Reading from the N-terminus, the 332-residue chain is 3-dehydrosphinganine reductase (332 aa).

A signal peptide spans 1 to 25 (MLLVVAAFIVAFVLLLYMISPLISP). NADPH contacts are provided by Gly39, Ser41, Ser42, Gly43, Arg64, Asp65, Lys68, and Asp93. The GXSXG motif lies at 39–43 (GGSSG). The active-site Proton donor is the Ser172. Residue Tyr186 is the Proton acceptor of the active site. The NADP(+) site is built by Tyr186 and Lys190. Lys190 functions as the Lowers pKa of active site Tyr in the catalytic mechanism.

It belongs to the short-chain dehydrogenases/reductases (SDR) family.

The protein localises to the endoplasmic reticulum. The enzyme catalyses sphinganine + NADP(+) = 3-oxosphinganine + NADPH + H(+). It functions in the pathway lipid metabolism; sphingolipid metabolism. Functionally, catalyzes the reduction of 3'-oxosphinganine (3-ketodihydrosphingosine/KDS) to sphinganine (dihydrosphingosine/DHS), the second step of de novo sphingolipid biosynthesis. In Danio rerio (Zebrafish), this protein is 3-dehydrosphinganine reductase (kdsr).